The chain runs to 73 residues: Defensin-like protein 6 (73 aa).

An N-terminal signal peptide occupies residues 1 to 26; it reads MENKFFAAFFLLLVLFSSQEIIGGEG. Disulfide bonds link Cys-29/Cys-73, Cys-40/Cys-60, Cys-46/Cys-67, and Cys-50/Cys-69.

It belongs to the DEFL family.

It localises to the secreted. In terms of biological role, confers broad-spectrum resistance to pathogens. This Arabidopsis thaliana (Mouse-ear cress) protein is Defensin-like protein 6 (PDF2.5).